Here is a 28-residue protein sequence, read N- to C-terminus: Cyclotide vodo I1 (28 aa).

3 disulfides stabilise this stretch: cysteine 4-cysteine 18, cysteine 8-cysteine 20, and cysteine 13-cysteine 25.

In terms of processing, this is a cyclic peptide. Post-translationally, contains 3 disulfide bonds.

Its function is as follows. Probably participates in a plant defense mechanism. The protein is Cyclotide vodo I1 of Viola odorata (Sweet violet).